We begin with the raw amino-acid sequence, 403 residues long: MDVDRLQEALKDFEKRGKKEVSPELDQFLCHVAKTGETVVQWPQFKEYFVFKLEMVMDDFRTSAPEQRGSPNPNVEYIPFDEMKQRILKIVTGFNGTPFTIQRLCELLTDPRKNYNGTDKFLRGVEKNIMVVSCVYPSSEKNNSTSLNRMNGVMFPSNSQSYTDRSNVNGPGTPRPMIRPKFSLSSPMNTNGLPDSTENKESDLQQKEKSQSDSAVSDDGSQATTSRNKHSAEDSAEVEEHEVKRLKFDPDEEEEAACANPDASSEVSAEMAEEAESASTSADKGKESCQTAQASDEESLMTASESTEAESNERDSENVSVTEESSEESHHMDQSEESESACSLTSDEHNSTAAATTSTEDADPSEEEHLATSSGKSTETLTLSPMENSEEATDAPEEPMEQD.

Composition is skewed to polar residues over residues 140–149 (EKNNSTSLNR), 156–170 (PSNS…NVNG), and 183–196 (SLSS…LPDS). A disordered region spans residues 140–403 (EKNNSTSLNR…DAPEEPMEQD (264 aa)). The segment covering 197 to 211 (TENKESDLQQKEKSQ) has biased composition (basic and acidic residues). Polar residues-rich tracts occupy residues 212-226 (SDSA…ATTS) and 371-387 (ATSS…SPME). Acidic residues predominate over residues 388-403 (NSEEATDAPEEPMEQD).

The protein belongs to the PPP4R2 family. Serine/threonine-protein phosphatase 4 (PP4) occurs in different assemblies of the catalytic and one or more regulatory subunits.

Its function is as follows. Regulatory subunit of serine/threonine-protein phosphatase 4 (PP4). In Xenopus laevis (African clawed frog), this protein is Serine/threonine-protein phosphatase 4 regulatory subunit 2-A (ppp4r2-a).